A 681-amino-acid chain; its full sequence is Minichromosome maintenance domain-containing protein 2 (681 aa).

At S292 the chain carries Phosphoserine. One can recognise an MCM domain in the interval 533–621 (KQFTTEDFEK…LIAALLLEIS (89 aa)).

As to expression, predominantly expressed in the gonads and the brain. Not detected in the heart, lung, nor embryonic fibroblasts.

In terms of biological role, plays an important role in meiotic recombination and associated DNA double-strand break repair. This is Minichromosome maintenance domain-containing protein 2 (Mcmdc2) from Mus musculus (Mouse).